We begin with the raw amino-acid sequence, 406 residues long: Tryptophan 2,3-dioxygenase (406 aa).

Ser19 carries the phosphoserine modification. Substrate contacts are provided by residues 72–76 (FIITH) and Arg144. His328 contacts heme. Residue Thr342 coordinates substrate.

Belongs to the tryptophan 2,3-dioxygenase family. As to quaternary structure, homotetramer. Dimer of dimers. It depends on heme as a cofactor.

It carries out the reaction L-tryptophan + O2 = N-formyl-L-kynurenine. Its pathway is amino-acid degradation; L-tryptophan degradation via kynurenine pathway; L-kynurenine from L-tryptophan: step 1/2. In terms of biological role, heme-dependent dioxygenase that catalyzes the oxidative cleavage of the L-tryptophan (L-Trp) pyrrole ring and converts L-tryptophan to N-formyl-L-kynurenine. Catalyzes the oxidative cleavage of the indole moiety. This is Tryptophan 2,3-dioxygenase from Bos taurus (Bovine).